A 380-amino-acid chain; its full sequence is Chaperone protein DnaJ (380 aa).

One can recognise a J domain in the interval 4–69 (DYYEILGVTR…QKRAAYDRFG (66 aa)). A CR-type zinc finger spans residues 135-213 (GKTAQINIPS…CQGTRRVEKN (79 aa)). Zn(2+) is bound by residues cysteine 148, cysteine 151, cysteine 165, cysteine 168, cysteine 187, cysteine 190, cysteine 201, and cysteine 204. CXXCXGXG motif repeat units lie at residues 148-155 (CDSCEGSG), 165-172 (CGTCHGAG), 187-194 (CHACNGRG), and 201-208 (CPKCQGTR).

It belongs to the DnaJ family. Homodimer. Zn(2+) is required as a cofactor.

The protein resides in the cytoplasm. In terms of biological role, participates actively in the response to hyperosmotic and heat shock by preventing the aggregation of stress-denatured proteins and by disaggregating proteins, also in an autonomous, DnaK-independent fashion. Unfolded proteins bind initially to DnaJ; upon interaction with the DnaJ-bound protein, DnaK hydrolyzes its bound ATP, resulting in the formation of a stable complex. GrpE releases ADP from DnaK; ATP binding to DnaK triggers the release of the substrate protein, thus completing the reaction cycle. Several rounds of ATP-dependent interactions between DnaJ, DnaK and GrpE are required for fully efficient folding. Also involved, together with DnaK and GrpE, in the DNA replication of plasmids through activation of initiation proteins. The polypeptide is Chaperone protein DnaJ (Bartonella quintana (strain Toulouse) (Rochalimaea quintana)).